We begin with the raw amino-acid sequence, 1012 residues long: Translation initiation factor IF-2, chloroplastic (1012 aa).

Over residues 75–102 (GNSVSLDSNSNSSSSSKSGGDDGTGFVL) the composition is skewed to low complexity. Disordered stretches follow at residues 75 to 132 (GNSV…VEER), 147 to 294 (EKLG…KEKK), and 319 to 340 (APPK…RKKG). Residues 152–175 (SKVNGDKNNGSVNKPVRNNANASP) show a composition bias toward polar residues. Positions 183–194 (SAASLKSKTLKS) are enriched in low complexity. The span at 208–231 (VVKEVPKPSYNKNEEEKSQTRGGE) shows a compositional bias: basic and acidic residues. Positions 240-257 (PQPPSKPQPLKPQQPSKP) are enriched in pro residues. Residues 277–294 (VLRDKGAAETSVKSKEKK) show a composition bias toward basic and acidic residues. In terms of domain architecture, tr-type G spans 488-661 (DRPPVITIMG…MLVAELQELK (174 aa)). Residues 497-504 (GHVDHGKT) are G1. 497 to 504 (GHVDHGKT) is a GTP binding site. The G2 stretch occupies residues 522 to 526 (GITQG). A G3 region spans residues 547–550 (DTPG). GTP contacts are provided by residues 547 to 551 (DTPGH) and 601 to 604 (NKID). The segment at 601–604 (NKID) is G4. The interval 637-639 (SAL) is G5.

The protein belongs to the TRAFAC class translation factor GTPase superfamily. Classic translation factor GTPase family. IF-2 subfamily.

The protein resides in the plastid. It is found in the chloroplast. In terms of biological role, one of the essential components for the initiation of protein synthesis. Protects formylmethionyl-tRNA from spontaneous hydrolysis and promotes its binding to the 30S ribosomal subunits. Also involved in the hydrolysis of GTP during the formation of the 70S ribosomal complex. The sequence is that of Translation initiation factor IF-2, chloroplastic (IF2CP) from Phaseolus vulgaris (Kidney bean).